The following is a 120-amino-acid chain: MEYEFLKDVTGVVKVRMSMGHEAIGHWFNDEVNGHPEILAEVEAAIAGVKGSERQWQRVGREYTLLLDEEEVMIRANQLGFEGDDMEEGMNYYDEESLSFCGVEDFLAIIAAYRAFLLGR.

Belongs to the UPF0231 family.

This is UPF0231 protein ETA_08290 from Erwinia tasmaniensis (strain DSM 17950 / CFBP 7177 / CIP 109463 / NCPPB 4357 / Et1/99).